The primary structure comprises 681 residues: Minichromosome maintenance domain-containing protein 2 (681 aa).

S292 bears the Phosphoserine mark. One can recognise an MCM domain in the interval R533 to S621.

In terms of biological role, plays an important role in meiotic recombination and associated DNA double-strand break repair. The sequence is that of Minichromosome maintenance domain-containing protein 2 (MCMDC2) from Homo sapiens (Human).